The following is a 285-amino-acid chain: Bifunctional protein FolD (285 aa).

Residues 165–167 (GRG), T192, and V233 contribute to the NADP(+) site.

This sequence belongs to the tetrahydrofolate dehydrogenase/cyclohydrolase family. In terms of assembly, homodimer.

It carries out the reaction (6R)-5,10-methylene-5,6,7,8-tetrahydrofolate + NADP(+) = (6R)-5,10-methenyltetrahydrofolate + NADPH. The catalysed reaction is (6R)-5,10-methenyltetrahydrofolate + H2O = (6R)-10-formyltetrahydrofolate + H(+). Its pathway is one-carbon metabolism; tetrahydrofolate interconversion. Its function is as follows. Catalyzes the oxidation of 5,10-methylenetetrahydrofolate to 5,10-methenyltetrahydrofolate and then the hydrolysis of 5,10-methenyltetrahydrofolate to 10-formyltetrahydrofolate. The sequence is that of Bifunctional protein FolD from Mycobacterium sp. (strain MCS).